Consider the following 343-residue polypeptide: 4-hydroxy-2-oxovalerate aldolase 2 (343 aa).

A Pyruvate carboxyltransferase domain is found at 5–255 (ITIVDTTLRD…DTGVDLFPLI (251 aa)). Substrate-binding positions include 13 to 14 (RD), S167, and H194. Residue D14 coordinates Mn(2+). Residues H194 and H196 each contribute to the Mn(2+) site. Residue Y285 coordinates substrate.

It belongs to the 4-hydroxy-2-oxovalerate aldolase family.

It catalyses the reaction (S)-4-hydroxy-2-oxopentanoate = acetaldehyde + pyruvate. The chain is 4-hydroxy-2-oxovalerate aldolase 2 from Rhodococcus jostii (strain RHA1).